A 44-amino-acid polypeptide reads, in one-letter code: M-factor (44 aa).

A propeptide spanning residues 1–32 (MDSIATNTHSSSIVNAYNNNPTDVVKTQNIKN) is cleaved from the precursor. At C41 the chain carries Cysteine methyl ester. C41 is lipidated: S-farnesyl cysteine. A propeptide spans 42-44 (VIA) (removed in mature form).

It localises to the secreted. Functionally, M-factor is a mating pheromone produced by M-type mating cells. All three mfm genes contribute to the production of M-factor. The protein is M-factor (mfm2) of Schizosaccharomyces pombe (strain 972 / ATCC 24843) (Fission yeast).